The primary structure comprises 214 residues: Small ribosomal subunit protein eS6 (214 aa).

This sequence belongs to the eukaryotic ribosomal protein eS6 family.

The polypeptide is Small ribosomal subunit protein eS6 (Saccharolobus solfataricus (strain ATCC 35092 / DSM 1617 / JCM 11322 / P2) (Sulfolobus solfataricus)).